Here is a 444-residue protein sequence, read N- to C-terminus: Trigger factor (444 aa).

A PPIase FKBP-type domain is found at 166–251 (GDQVVIDFEG…VHAVKAPKPA (86 aa)).

This sequence belongs to the FKBP-type PPIase family. Tig subfamily.

The protein localises to the cytoplasm. It carries out the reaction [protein]-peptidylproline (omega=180) = [protein]-peptidylproline (omega=0). Involved in protein export. Acts as a chaperone by maintaining the newly synthesized protein in an open conformation. Functions as a peptidyl-prolyl cis-trans isomerase. This is Trigger factor (tig) from Rhodobacter capsulatus (strain ATCC BAA-309 / NBRC 16581 / SB1003).